The following is a 260-amino-acid chain: Sphinganine C4-monooxygenase 1 (260 aa).

The next 3 membrane-spanning stretches (helical) occupy residues 11-31 (LLGT…YVAL), 55-75 (SVVK…ILLF), and 92-112 (FLVL…WQYF). The Fatty acid hydroxylase domain occupies 99 to 235 (FVTAMIVLDT…FVMWDRILGT (137 aa)). The short motif at 114–118 (HRYMH) is the Histidine box-1 element. The Histidine box-2 signature appears at 128-132 (HSQHH). The Histidine box-3 signature appears at 207–213 (YHDIHHQ).

It belongs to the sterol desaturase family. The cofactor is Fe cation. In terms of tissue distribution, ubiquitous, with higher levels in flowers and roots.

It localises to the endoplasmic reticulum membrane. It carries out the reaction a dihydroceramide + 2 Fe(II)-[cytochrome b5] + O2 + 2 H(+) = a phytoceramide + 2 Fe(III)-[cytochrome b5] + H2O. It participates in membrane lipid metabolism; sphingolipid biosynthesis. Involved in sphingolipid trihydroxy long-chain base (4-hydroxysphinganine) biosynthesis. Can use C18- and C20-sphinganine as substrates to produce C18- and C20-phytosphinganines (D-ribo-2-amino-1,3,4-trihydroxyoctadecane and -eicosane). The chain is Sphinganine C4-monooxygenase 1 (SBH1) from Arabidopsis thaliana (Mouse-ear cress).